We begin with the raw amino-acid sequence, 175 residues long: Protein SELF-PRUNING (175 aa).

It belongs to the phosphatidylethanolamine-binding protein family.

It is found in the cytoplasm. Its function is as follows. Not known. In plants homozygous for the recessive allele of the SP gene, sympodial segments develop progressively fewer nodes until the shoot is terminated by two consecutive. inflorescences. The chain is Protein SELF-PRUNING (SP) from Solanum lycopersicum (Tomato).